A 322-amino-acid polypeptide reads, in one-letter code: Pilin gene-inverting protein (322 aa).

Functionally, may be the site-specific invertase required for pilin gene inversion. Moraxella can express either a Q or I pilin; the inversion of 2 kb of DNA determines which pilin is expressed. This Moraxella bovis protein is Pilin gene-inverting protein (piv).